Reading from the N-terminus, the 388-residue chain is Gastricsin (388 aa).

Residues 1–16 form the signal peptide; it reads MKWMVVVLVCLQLLEA. A propeptide spans 17–59 (activation peptide); the sequence is AVVKVPLKKFKSIRETMKEKGLLGEFLRTHKYDPAWKYRFGDL. Residues 73-385 form the Peptidase A1 domain; the sequence is YFGEISIGTP…DLGNNRVGFA (313 aa). D91 is a catalytic residue. Cystine bridges form between C104–C109 and C267–C271. Residue D276 is part of the active site. Residues C310 and C343 are joined by a disulfide bond.

The protein belongs to the peptidase A1 family.

The protein localises to the secreted. It carries out the reaction More restricted specificity than pepsin A, but shows preferential cleavage at Tyr-|-Xaa bonds. High activity on hemoglobin.. Hydrolyzes a variety of proteins. This Homo sapiens (Human) protein is Gastricsin (PGC).